A 188-amino-acid chain; its full sequence is Elongation factor P (188 aa).

This sequence belongs to the elongation factor P family.

It localises to the cytoplasm. Its pathway is protein biosynthesis; polypeptide chain elongation. Its function is as follows. Involved in peptide bond synthesis. Stimulates efficient translation and peptide-bond synthesis on native or reconstituted 70S ribosomes in vitro. Probably functions indirectly by altering the affinity of the ribosome for aminoacyl-tRNA, thus increasing their reactivity as acceptors for peptidyl transferase. The polypeptide is Elongation factor P (Leptospira biflexa serovar Patoc (strain Patoc 1 / Ames)).